The following is a 288-amino-acid chain: 4-hydroxy-3-methylbut-2-enyl diphosphate reductase (288 aa).

C12 provides a ligand contact to [4Fe-4S] cluster. (2E)-4-hydroxy-3-methylbut-2-enyl diphosphate contacts are provided by H42 and H77. Residues H42 and H77 each contribute to the dimethylallyl diphosphate site. Isopentenyl diphosphate contacts are provided by H42 and H77. C99 contributes to the [4Fe-4S] cluster binding site. Residue H127 coordinates (2E)-4-hydroxy-3-methylbut-2-enyl diphosphate. H127 is a dimethylallyl diphosphate binding site. H127 is an isopentenyl diphosphate binding site. The active-site Proton donor is the E129. Residue T165 participates in (2E)-4-hydroxy-3-methylbut-2-enyl diphosphate binding. C193 contacts [4Fe-4S] cluster. The (2E)-4-hydroxy-3-methylbut-2-enyl diphosphate site is built by S221, S222, N223, and S265. Residues S221, S222, N223, and S265 each contribute to the dimethylallyl diphosphate site. Isopentenyl diphosphate-binding residues include S221, S222, N223, and S265.

It belongs to the IspH family. Requires [4Fe-4S] cluster as cofactor.

It carries out the reaction isopentenyl diphosphate + 2 oxidized [2Fe-2S]-[ferredoxin] + H2O = (2E)-4-hydroxy-3-methylbut-2-enyl diphosphate + 2 reduced [2Fe-2S]-[ferredoxin] + 2 H(+). The catalysed reaction is dimethylallyl diphosphate + 2 oxidized [2Fe-2S]-[ferredoxin] + H2O = (2E)-4-hydroxy-3-methylbut-2-enyl diphosphate + 2 reduced [2Fe-2S]-[ferredoxin] + 2 H(+). It functions in the pathway isoprenoid biosynthesis; dimethylallyl diphosphate biosynthesis; dimethylallyl diphosphate from (2E)-4-hydroxy-3-methylbutenyl diphosphate: step 1/1. It participates in isoprenoid biosynthesis; isopentenyl diphosphate biosynthesis via DXP pathway; isopentenyl diphosphate from 1-deoxy-D-xylulose 5-phosphate: step 6/6. In terms of biological role, catalyzes the conversion of 1-hydroxy-2-methyl-2-(E)-butenyl 4-diphosphate (HMBPP) into a mixture of isopentenyl diphosphate (IPP) and dimethylallyl diphosphate (DMAPP). Acts in the terminal step of the DOXP/MEP pathway for isoprenoid precursor biosynthesis. In Thermoanaerobacter pseudethanolicus (strain ATCC 33223 / 39E) (Clostridium thermohydrosulfuricum), this protein is 4-hydroxy-3-methylbut-2-enyl diphosphate reductase.